The primary structure comprises 64 residues: Large ribosomal subunit protein bL35 (64 aa).

It belongs to the bacterial ribosomal protein bL35 family.

This chain is Large ribosomal subunit protein bL35, found in Amoebophilus asiaticus (strain 5a2).